The primary structure comprises 116 residues: Nitrogenase iron-iron protein delta chain (116 aa).

In terms of assembly, hexamer of two alpha, two beta, and two delta chains. Iron-sulfur cluster serves as cofactor.

The enzyme catalyses N2 + 8 reduced [2Fe-2S]-[ferredoxin] + 16 ATP + 16 H2O = H2 + 8 oxidized [2Fe-2S]-[ferredoxin] + 2 NH4(+) + 16 ADP + 16 phosphate + 6 H(+). In terms of biological role, the key enzymatic reactions in nitrogen fixation are catalyzed by the nitrogenase complex, which has 2 components: the iron protein (component 2) and a component 1 which is either a molybdenum-iron protein, a vanadium-iron, or an iron-iron protein. The polypeptide is Nitrogenase iron-iron protein delta chain (anfG) (Clostridium pasteurianum).